The chain runs to 304 residues: MNRLAVEIPGLSLKNPIMPASGCFGFGQEYSKYYDLNELGAIMAKAVTPEPRLGNPTPRVAETASGMLNAIGLQNPGLEHVLAHELPFLEQFETPIIANVAGATEDDYVQVCARIGESKAVKAIELNISCPNVKHGGIAFGTDPDVAHRLTKAVKNVATVPVYVKLSPNVADIVSIAQAIEAAGADGLTMINTLLGMRIDLKTRKPIIANGTGGLSGPAIKPVAIRMIHQVREVSNIPIIGMGGVQTVDDVLEFLIAGADAVAVGTMNFTDPFICPKLISELPKRMDELGISSLQELKKERTNQ.

FMN-binding positions include Ser-21 and Lys-45–Ala-46. Substrate-binding positions include Lys-45 and Asn-69 to Leu-73. Asn-99 and Asn-127 together coordinate FMN. Asn-127 provides a ligand contact to substrate. Cys-130 serves as the catalytic Nucleophile. Lys-165 and Ile-191 together coordinate FMN. Asn-192–Thr-193 lines the substrate pocket. Residues Gly-217, Gly-243–Gly-244, and Gly-265–Thr-266 each bind FMN.

It belongs to the dihydroorotate dehydrogenase family. Type 1 subfamily. As to quaternary structure, heterotetramer of 2 PyrK and 2 PyrD type B subunits. FMN serves as cofactor.

The protein resides in the cytoplasm. The enzyme catalyses (S)-dihydroorotate + NAD(+) = orotate + NADH + H(+). Its pathway is pyrimidine metabolism; UMP biosynthesis via de novo pathway; orotate from (S)-dihydroorotate (NAD(+) route): step 1/1. In terms of biological role, catalyzes the conversion of dihydroorotate to orotate with NAD(+) as electron acceptor. The sequence is that of Dihydroorotate dehydrogenase B (NAD(+)), catalytic subunit (pyrD) from Listeria monocytogenes serotype 4b (strain CLIP80459).